Consider the following 686-residue polypeptide: Aminodeoxychorismate synthase (686 aa).

A Glutamine amidotransferase type-1 domain is found at 2-194 (RTLLIDNYDS…RDLALAHHRA (193 aa)). Residue Cys81 is the Nucleophile of the active site. Catalysis depends on residues His168 and Glu170. Residues 233–686 (LDSSSVLEGA…LDGSAVAGAR (454 aa)) are PABB component.

It in the C-terminal section; belongs to the anthranilate synthase component I family.

It carries out the reaction chorismate + L-glutamine = 4-amino-4-deoxychorismate + L-glutamate. The protein operates within antibiotic biosynthesis. Functionally, involved in chloramphenicol biosynthesis. Catalyzes the biosynthesis of 4-amino-4-deoxychorismate (ADC) from chorismate and glutamine. This is Aminodeoxychorismate synthase from Streptomyces venezuelae (strain ATCC 10712 / CBS 650.69 / DSM 40230 / JCM 4526 / NBRC 13096 / PD 04745).